The chain runs to 692 residues: Elongation factor G (692 aa).

The tr-type G domain maps to 8 to 282 (EKTRNIGIMA…AIVDFLPAPT (275 aa)). GTP-binding positions include 17 to 24 (AHIDAGKT), 81 to 85 (DTPGH), and 135 to 138 (NKMD).

This sequence belongs to the TRAFAC class translation factor GTPase superfamily. Classic translation factor GTPase family. EF-G/EF-2 subfamily.

Its subcellular location is the cytoplasm. Its function is as follows. Catalyzes the GTP-dependent ribosomal translocation step during translation elongation. During this step, the ribosome changes from the pre-translocational (PRE) to the post-translocational (POST) state as the newly formed A-site-bound peptidyl-tRNA and P-site-bound deacylated tRNA move to the P and E sites, respectively. Catalyzes the coordinated movement of the two tRNA molecules, the mRNA and conformational changes in the ribosome. In Moorella thermoacetica (strain ATCC 39073 / JCM 9320), this protein is Elongation factor G.